The chain runs to 186 residues: Dual-action ribosomal maturation protein DarP (186 aa).

It belongs to the DarP family.

It localises to the cytoplasm. Functionally, member of a network of 50S ribosomal subunit biogenesis factors which assembles along the 30S-50S interface, preventing incorrect 23S rRNA structures from forming. Promotes peptidyl transferase center (PTC) maturation. The chain is Dual-action ribosomal maturation protein DarP from Proteus mirabilis (strain HI4320).